A 146-amino-acid chain; its full sequence is MVMGLGLFLLVFMLGLGLTPPTLAQDNSRYRDFLTKHYDATPQGRNDRYCESMMRRRGLTSPCKDINTFIHGNSRHIKAICGDENGNPYRENLRISKSPFQVTTCNLRGGSPWPPCRYRATAGFRNIVVACENDLPVHLDQSIFHP.

Residues 1-24 (MVMGLGLFLLVFMLGLGLTPPTLA) form the signal peptide. A Pyrrolidone carboxylic acid modification is found at Gln-25. The active-site Proton acceptor is the His-37. A tRNA-binding site is contributed by Arg-45. 3 disulfides stabilise this stretch: Cys-50–Cys-105, Cys-63–Cys-116, and Cys-81–Cys-131. The Nucleolar localization signal motif lies at 55 to 59 (RRRGL). TRNA contacts are provided by Cys-105 and Ile-127. His-138 acts as the Proton donor in catalysis.

It belongs to the pancreatic ribonuclease family. In terms of assembly, homodimer. Interacts with RNH1; inhibiting ANG ribonuclease activity. Interacts with PCNA.

It localises to the secreted. The protein resides in the nucleus. It is found in the nucleolus. Its subcellular location is the cytoplasm. The protein localises to the stress granule. Has weak tRNA ribonuclease activity by itself due to partial autoinhibition by its C-terminus, which folds into a short alpha-helix that partially occludes the substrate-binding site. In absence of stress, the ribonuclease activity is inhibited by RNH1 in the cytoplasm. In response to stress, dissociates from RNH1 in the cytoplasm and associates with cytoplasmic ribosomes with vacant A-sites: ribosomes directly activate the tRNA ribonuclease activity of ANG by refolding the C-terminal alpha-helix. In response to stress, the angiogenic activity of ANG is inhibited by RNH1 in the nucleus. Secreted ribonuclease that can either promote or restrict cell proliferation of target cells, depending on the context. Endocytosed in target cells via its receptor PLXNB2 and translocates to the cytoplasm or nucleus. Under stress conditions, localizes to the cytoplasm and promotes the assembly of stress granules (SGs): specifically cleaves a subset of tRNAs within anticodon loops to produce tRNA-derived stress-induced fragments (tiRNAs), resulting in translation repression and inhibition of cell proliferation. tiRNas also prevent formation of apoptosome, thereby promoting cell survival. Preferentially cleaves RNAs between a pyrimidine and an adenosine residue, suggesting that it cleaves the anticodon loop of tRNA(Ala) (32-UUAGCAU-38) after positions 33 and 36. Cleaves a subset of tRNAs, including tRNA(Ala), tRNA(Glu), tRNA(Gly), tRNA(Lys), tRNA(Val), tRNA(His), tRNA(Asp) and tRNA(Sec). Under growth conditions and in differentiated cells, translocates to the nucleus and stimulates ribosomal RNA (rRNA) transcription, including that containing the initiation site sequences of 45S rRNA, thereby promoting cell growth and proliferation. Angiogenin induces vascularization of normal and malignant tissues via its ability to promote rRNA transcription. Involved in hematopoietic stem and progenitor cell (HSPC) growth and survival by promoting rRNA transcription in growth conditions and inhibiting translation in response to stress, respectively. Mediates the crosstalk between myeloid and intestinal epithelial cells to protect the intestinal epithelial barrier integrity: secreted by myeloid cells and promotes intestinal epithelial cells proliferation and survival. Also mediates osteoclast-endothelial cell crosstalk in growing bone: produced by osteoclasts and protects the neighboring vascular cells against senescence by promoting rRNA transcription. The sequence is that of Angiogenin (ANG) from Trachypithecus francoisi (Francois' leaf monkey).